Reading from the N-terminus, the 531-residue chain is SWI/SNF-related matrix-associated actin-dependent regulator of chromatin subfamily D member 2 (531 aa).

Residues Arg81 and Arg104 each carry the asymmetric dimethylarginine modification. Ser203 is subject to Phosphoserine. The tract at residues 205–227 (SKAEGDTAGTTGTPGGTPAGDKV) is disordered. The residue at position 217 (Thr217) is a Phosphothreonine. A Glycyl lysine isopeptide (Lys-Gly) (interchain with G-Cter in SUMO2) cross-link involves residue Lys226. The SWIB/MDM2 domain occupies 306-383 (HQPPQYKLDP…PMKLAGLLQH (78 aa)).

It belongs to the SMARCD family. In terms of assembly, component of the multiprotein chromatin-remodeling complexes SWI/SNF: SWI/SNF-A (BAF), SWI/SNF-B (PBAF) and related complexes. The canonical complex contains a catalytic subunit (either SMARCA4/BRG1/BAF190A or SMARCA2/BRM/BAF190B), and at least SMARCE1, ACTL6A/BAF53, SMARCC1/BAF155, SMARCC2/BAF170, and SMARCB1/SNF5/BAF47. Other subunits specific to each of the complexes may also be present permitting several possible combinations developmentally and tissue specific. Component of the BAF complex, which includes at least actin (ACTB), ARID1A/BAF250A, ARID1B/BAF250B, SMARCA2/BRM, SMARCA4/BRG1, ACTL6A/BAF53, ACTL6B/BAF53B, SMARCE1/BAF57, SMARCC1/BAF155, SMARCC2/BAF170, SMARCB1/SNF5/INI1, and one or more SMARCD1/BAF60A, SMARCD2/BAF60B, or SMARCD3/BAF60C. In muscle cells, the BAF complex also contains DPF3. Component of the SWI/SNF-B (PBAF) chromatin remodeling complex, at least composed of SMARCA4/BRG1, SMARCB1/BAF47/SNF5, ACTL6A/BAF53A or ACTL6B/BAF53B, SMARCE1/BAF57, SMARCD1/BAF60A, SMARCD2/BAF60B, perhaps SMARCD3/BAF60C, SMARCC1/BAF155, SMARCC2/BAF170, PBRM1/BAF180, ARID2/BAF200 and actin (ACTB). Interacts with UNKL. Interacts with CEBPE. Post-translationally, ubiquitinated through a signaling process involving RAC1 and the RING finger protein UNKL.

The protein resides in the nucleus. Its function is as follows. Involved in transcriptional activation and repression of select genes by chromatin remodeling (alteration of DNA-nucleosome topology). Component of SWI/SNF chromatin remodeling complexes that carry out key enzymatic activities, changing chromatin structure by altering DNA-histone contacts within a nucleosome in an ATP-dependent manner. Critical regulator of myeloid differentiation, controlling granulocytopoiesis and the expression of genes involved in neutrophil granule formation. The protein is SWI/SNF-related matrix-associated actin-dependent regulator of chromatin subfamily D member 2 (SMARCD2) of Bos taurus (Bovine).